A 538-amino-acid chain; its full sequence is MAKLLRYSEEARRSLEAGVDAVANAVKITLGPKGRNVVIEKSWGSPTITNDGVSIAKEIELEDKFANLGAQLVKEVASKTNDVAGDGTTTATVLAQAMIKEGLKMVAAGANPILIKKGIDKATSKVVEEIKKISKKLSSTEDIAHVASISANSEEIGKLIAEAMEKVGEDGVITVEDSKTIDTYVEFTEGMQFDRGYISPYFVTDPEKMEVVYNEPFILITDRKLSNVKPLIPILEKVAQTGRPLVIIAEDVEGEVLTTLVLNKLKGTLNTVAVKAPGFGDRRKAMLQDIAILTGGIVASEEVGINLEDLTLQDLGRADVVRVKKDETIIVGGKGKPEEIKKRVAQIKAQIEQTTSEYEKETLQERMAKLAGGVAVIKVGAATETELKEKKHRIEDALSATRAAVEEGIVPGGGITLLRARKVLEPVLNELTGDEKLGAQIVYNALEAPIRQIALNAGYDGAIIIHNVLSKDDVAYGFDALKGEYCNMYERGIIDPAKVTRSALQNAASIAGMLLTTEVLVVEKPEEKKPAAPEMPEY.

ATP contacts are provided by residues 29 to 32 (TLGP), 86 to 90 (DGTTT), glycine 413, 479 to 481 (DAL), and aspartate 495.

Belongs to the chaperonin (HSP60) family. In terms of assembly, forms a cylinder of 14 subunits composed of two heptameric rings stacked back-to-back. Interacts with the co-chaperonin GroES.

It is found in the cytoplasm. The catalysed reaction is ATP + H2O + a folded polypeptide = ADP + phosphate + an unfolded polypeptide.. Functionally, together with its co-chaperonin GroES, plays an essential role in assisting protein folding. The GroEL-GroES system forms a nano-cage that allows encapsulation of the non-native substrate proteins and provides a physical environment optimized to promote and accelerate protein folding. The protein is Chaperonin GroEL of Fervidobacterium nodosum (strain ATCC 35602 / DSM 5306 / Rt17-B1).